The chain runs to 660 residues: Pentatricopeptide repeat-containing protein At4g20090 (660 aa).

PPR repeat units lie at residues Gly76–Ile110, Ile111–Glu141, Ser147–Met181, Asn186–Pro220, Asp221–Pro255, Ser256–Pro290, Asn291–Pro325, Asn326–Leu360, Asn361–Pro395, Asn396–Pro430, Asn431–Arg465, Asn466–Pro500, Asp501–Lys535, Asp539–Pro573, and Asp574–Arg609.

This sequence belongs to the PPR family. P subfamily.

May play a role in embryogenesis. This chain is Pentatricopeptide repeat-containing protein At4g20090 (EMB1025), found in Arabidopsis thaliana (Mouse-ear cress).